The following is a 123-amino-acid chain: UPF0102 protein Cbei_1183 (123 aa).

The protein belongs to the UPF0102 family.

The chain is UPF0102 protein Cbei_1183 from Clostridium beijerinckii (strain ATCC 51743 / NCIMB 8052) (Clostridium acetobutylicum).